The primary structure comprises 159 residues: Neuroglobin (159 aa).

One can recognise a Globin domain in the interval 3–151 (KLSEKDKELI…VVAAMSQGWA (149 aa)). Positions 66 and 98 each coordinate heme b.

Belongs to the globin family. Monomer. Homodimers and homotetramers. Mainly monomeric but also detected as part of homodimers and homotetramers.

Its subcellular location is the cytoplasm. It localises to the cytosol. The protein resides in the mitochondrion matrix. It catalyses the reaction Fe(III)-heme b-[protein] + nitric oxide + H2O = Fe(II)-heme b-[protein] + nitrite + 2 H(+). Functionally, monomeric globin with a bis-histidyl six-coordinate heme-iron atom through which it can bind dioxygen, carbon monoxide and nitric oxide. Could help transport oxygen and increase its availability to the metabolically active neuronal tissues, though its low quantity in tissues as well as its high affinity for dioxygen, which may limit its oxygen-releasing ability, argue against it. The ferrous/deoxygenated form exhibits a nitrite reductase activity and it could produce nitric oxide which in turn inhibits cellular respiration in response to hypoxia. In its ferrous/deoxygenated state, it may also exhibit GDI (Guanine nucleotide Dissociation Inhibitor) activity toward heterotrimeric G-alpha proteins, thereby regulating signal transduction to facilitate neuroprotective responses in the wake of hypoxia and associated oxidative stress. In Chaenocephalus aceratus (Blackfin icefish), this protein is Neuroglobin (ngb).